The following is an 840-amino-acid chain: Phosphatidylglycerol lysyltransferase (840 aa).

Residues Met-1 to Lys-8 are Cytoplasmic-facing. A helical transmembrane segment spans residues Ile-9 to Leu-29. At Tyr-30 to Ser-52 the chain is on the extracellular side. A helical transmembrane segment spans residues Leu-53–Ile-73. Over Leu-74–Arg-89 the chain is Cytoplasmic. A helical membrane pass occupies residues Val-90–Gly-110. At Val-111 to His-128 the chain is on the extracellular side. A helical transmembrane segment spans residues Phe-129–Val-149. Over Phe-150–Lys-161 the chain is Cytoplasmic. The chain crosses the membrane as a helical span at residues Ile-162–Tyr-182. Over Ser-183 to Thr-200 the chain is Extracellular. A helical membrane pass occupies residues Leu-201–Val-221. Topologically, residues Asp-222–Ser-229 are cytoplasmic. Residues Phe-230–Phe-250 form a helical membrane-spanning segment. Residues Gly-251 to Val-271 lie on the Extracellular side of the membrane. The chain crosses the membrane as a helical span at residues Leu-272 to Ile-292. Residues Leu-293–Ser-337 are Cytoplasmic-facing. A helical membrane pass occupies residues Leu-338–Tyr-358. The Extracellular portion of the chain corresponds to Asp-359–Tyr-369. Residues Tyr-370–Ile-390 form a helical membrane-spanning segment. Over Tyr-391 to Ser-394 the chain is Cytoplasmic. The next 2 helical transmembrane spans lie at Arg-395–Thr-415 and Tyr-416–Phe-436. At Arg-437 to Asn-450 the chain is on the cytoplasmic side. A helical transmembrane segment spans residues Leu-451–Gly-471. At Thr-472 to Lys-489 the chain is on the extracellular side. The chain crosses the membrane as a helical span at residues Tyr-490–Phe-510. Residues Asp-511–Lys-840 are Cytoplasmic-facing.

It belongs to the LPG synthase family.

The protein localises to the cell membrane. The catalysed reaction is L-lysyl-tRNA(Lys) + a 1,2-diacyl-sn-glycero-3-phospho-(1'-sn-glycerol) = a 1,2-diacyl-sn-glycero-3-phospho-1'-(3'-O-L-lysyl)-sn-glycerol + tRNA(Lys). Catalyzes the transfer of a lysyl group from L-lysyl-tRNA(Lys) to membrane-bound phosphatidylglycerol (PG), which produces lysylphosphatidylglycerol (LPG), a major component of the bacterial membrane with a positive net charge. LPG synthesis contributes to bacterial virulence as it is involved in the resistance mechanism against cationic antimicrobial peptides (CAMP) produces by the host's immune system (defensins, cathelicidins) and by the competing microorganisms (bacteriocins). In fact, the modification of anionic phosphatidylglycerol with positively charged L-lysine results in repulsion of the peptides. In Staphylococcus aureus (strain MRSA252), this protein is Phosphatidylglycerol lysyltransferase (mprF).